A 959-amino-acid chain; its full sequence is AP2-associated protein kinase 1 (959 aa).

M1 carries the N-acetylmethionine modification. Over residues 1–11 (MKKFFDSRREQ) the composition is skewed to basic and acidic residues. The interval 1–27 (MKKFFDSRREQGSSGLGSGSSGGGGSS) is disordered. S14 carries the phosphoserine modification. Residues 14 to 27 (SGLGSGSSGGGGSS) show a composition bias toward gly residues. A Protein kinase domain is found at 46–315 (VTVDEVLAEG…QVSYFSFKLL (270 aa)). Residues 52–60 (LAEGGFALV) and K74 each bind ATP. Catalysis depends on D176, which acts as the Proton acceptor. Y234 bears the Phosphotyrosine mark. Position 235 is a phosphoserine (S235). The tract at residues 340–385 (SEAAVKKTQPKARLTDPIPTTETSIAPRQRPKAGQTQPNPGILPIQ) is disordered. A phosphothreonine mark is found at T354 and T389. R391 carries the omega-N-methylarginine modification. Disordered regions lie at residues 398–514 (PLPQ…AVHP) and 578–630 (TAPQ…RAGH). Over residues 404–419 (GPSNQPGLLPSVSQPK) the composition is skewed to polar residues. The segment covering 420–435 (AQATPSQPLQSSQPKQ) has biased composition (low complexity). T441 carries the phosphothreonine modification. 3 stretches are compositionally biased toward low complexity: residues 444 to 481 (QTPATQTQGLPTQAQATPQHQQQHLLKQQQQQQQQPQQ), 494 to 510 (QQQQQQQQQQAQTQQFQ), and 578 to 603 (TAPQAAAAQEPGQIQAPVRQQPKVQT). Position 604 is a phosphothreonine (T604). The span at 609-625 (IQGQKVGSLTPPSSPKT) shows a compositional bias: polar residues. Residue S616 is modified to Phosphoserine. T618 carries the post-translational modification Phosphothreonine. Phosphoserine is present on residues S621, S622, S635, and S648. A Phosphothreonine modification is found at T651. Disordered regions lie at residues 662–699 (SLNKSKSATTTPSGSPRTSQQNVSNASEGSTWNPFDDD), 727–763 (GGSAESLIPGFQPTQGDAFTTPSFSAGTAEKRKGGQA), 837–857 (PVAQRLPSQTESVTSNRTDSL), and 923–943 (ITKNTQGGHSRNSSGSSESSL). The segment covering 670–694 (TTTPSGSPRTSQQNVSNASEGSTWN) has biased composition (polar residues). S729 is subject to Phosphoserine. 2 stretches are compositionally biased toward polar residues: residues 738–752 (QPTQGDAFTTPSFSA) and 842–857 (LPSQTESVTSNRTDSL). The interval 821 to 958 (DKADVAVESL…SLLLVDQLID (138 aa)) is clathrin-binding domain (CBD). Phosphoserine occurs at positions 844, 935, and 936. Low complexity predominate over residues 929-942 (GGHSRNSSGSSESS).

This sequence belongs to the protein kinase superfamily. Ser/Thr protein kinase family. As to quaternary structure, interacts (via CBD domain) with clathrin. Interacts with AP-2 complex. Interacts with NUMB. Interacts with alpha-adaptin. Interacts with EPS15 isoform 2. Interacts with membrane-bound activated NOTCH1 but not with the inactive full-length form of NOTCH1. Preferentially interacts with monoubiquitinated activated NOTCH1 compared to the non-ubiquitinated form. Autophosphorylated.

Its subcellular location is the cell membrane. It localises to the membrane. It is found in the clathrin-coated pit. The protein localises to the presynapse. The enzyme catalyses L-seryl-[protein] + ATP = O-phospho-L-seryl-[protein] + ADP + H(+). It catalyses the reaction L-threonyl-[protein] + ATP = O-phospho-L-threonyl-[protein] + ADP + H(+). Stimulated by clathrin. Its function is as follows. Regulates clathrin-mediated endocytosis by phosphorylating the AP2M1/mu2 subunit of the adaptor protein complex 2 (AP-2) which ensures high affinity binding of AP-2 to cargo membrane proteins during the initial stages of endocytosis. Preferentially, may phosphorylate substrates on threonine residues. Regulates phosphorylation of other AP-2 subunits as well as AP-2 localization and AP-2-mediated internalization of ligand complexes. Phosphorylates NUMB and regulates its cellular localization, promoting NUMB localization to endosomes. Binds to and stabilizes the activated form of NOTCH1, increases its localization in endosomes and regulates its transcriptional activity. The polypeptide is AP2-associated protein kinase 1 (Aak1) (Mus musculus (Mouse)).